A 467-amino-acid polypeptide reads, in one-letter code: Microtubule-associated tyrosine carboxypeptidase 1 (467 aa).

Polar residues predominate over residues 1 to 10 (MVLDSGTQVY). Disordered stretches follow at residues 1 to 40 (MVLDSGTQVYEQAPPRPPAGSPSQHHKLKPSNGNGPPLYP) and 77 to 111 (MRRSESTYSVNSTGRRGRGKAPIGRGCDPGGTLRP). Histidine 276 is a Zn(2+) binding site. Residue glutamate 277 is the Nucleophile of the active site. Zn(2+) contacts are provided by histidine 281 and glutamate 312.

This sequence belongs to the peptidase MATCAP family. It depends on Zn(2+) as a cofactor.

It is found in the cytoplasm. Its subcellular location is the cytoskeleton. The enzyme catalyses C-terminal L-alpha-aminoacyl-L-glutamyl-L-glutamyl-L-tyrosyl-[tubulin] + H2O = C-terminal L-alpha-aminoacyl-L-glutamyl-L-glutamyl-[tubulin] + L-tyrosine. It catalyses the reaction C-terminal L-alpha-aminoacyl-L-glutamyl-L-glutamyl-L-phenylalanyl-[tubulin] + H2O = C-terminal L-alpha-aminoacyl-L-glutamyl-L-glutamyl-[tubulin] + L-phenylalanine. Tyrosine carboxypeptidase that removes the C-terminal tyrosine residue of alpha-tubulin, thereby regulating microtubule dynamics and function. Also able to remove the C-terminal phenylalanine residue of alpha-tubulin TUBA8. Recognizes adjacent tubulin dimers along the same protofilament. The chain is Microtubule-associated tyrosine carboxypeptidase 1 from Mus musculus (Mouse).